A 221-amino-acid polypeptide reads, in one-letter code: Probable endo-1,4-beta-xylanase B (221 aa).

The N-terminal stretch at 1-19 is a signal peptide; it reads MVSFSSLALALSTVVGVLA. Positions 33 to 221 constitute a GH11 domain; the sequence is QLTHSQTGTK…SSGSATMTVS (189 aa). The active-site Nucleophile is Glu117. Glu208 functions as the Proton donor in the catalytic mechanism.

This sequence belongs to the glycosyl hydrolase 11 (cellulase G) family.

Its subcellular location is the secreted. It catalyses the reaction Endohydrolysis of (1-&gt;4)-beta-D-xylosidic linkages in xylans.. It functions in the pathway glycan degradation; xylan degradation. In terms of biological role, endo-1,4-beta-xylanase involved in the hydrolysis of xylan, a major structural heterogeneous polysaccharide found in plant biomass representing the second most abundant polysaccharide in the biosphere, after cellulose. The sequence is that of Probable endo-1,4-beta-xylanase B (xlnB) from Aspergillus clavatus (strain ATCC 1007 / CBS 513.65 / DSM 816 / NCTC 3887 / NRRL 1 / QM 1276 / 107).